The chain runs to 236 residues: UPF0173 metal-dependent hydrolase DSY1309 (236 aa).

It belongs to the UPF0173 family.

The sequence is that of UPF0173 metal-dependent hydrolase DSY1309 from Desulfitobacterium hafniense (strain Y51).